We begin with the raw amino-acid sequence, 360 residues long: Nodulin-44 (360 aa).

The signal sequence occupies residues 1 to 23 (MEEKILMRVIVITVFLFIGAATA). Disordered stretches follow at residues 123–148 (FSPR…VIPL) and 228–249 (FSPR…TLGR).

Belongs to the nodulin 20 family.

This is Nodulin-44 from Glycine max (Soybean).